The following is an 882-amino-acid chain: Valine--tRNA ligase (882 aa).

The 'HIGH' region signature appears at 45–55; sequence PNVTGSLHIGH. Residues 525 to 529 carry the 'KMSKS' region motif; that stretch reads KFSKS. ATP is bound at residue Lys-528. The stretch at 812–881 forms a coiled coil; that stretch reads EGLIDVAKEK…VLKKGIQNLA (70 aa).

Belongs to the class-I aminoacyl-tRNA synthetase family. ValS type 1 subfamily. Monomer.

Its subcellular location is the cytoplasm. It carries out the reaction tRNA(Val) + L-valine + ATP = L-valyl-tRNA(Val) + AMP + diphosphate. Its function is as follows. Catalyzes the attachment of valine to tRNA(Val). As ValRS can inadvertently accommodate and process structurally similar amino acids such as threonine, to avoid such errors, it has a 'posttransfer' editing activity that hydrolyzes mischarged Thr-tRNA(Val) in a tRNA-dependent manner. This is Valine--tRNA ligase from Leptospira interrogans serogroup Icterohaemorrhagiae serovar copenhageni (strain Fiocruz L1-130).